A 368-amino-acid chain; its full sequence is tRNA N6-adenosine threonylcarbamoyltransferase (368 aa).

Fe cation contacts are provided by histidine 108 and histidine 112. Residues 149–153, aspartate 183, glycine 196, aspartate 200, and asparagine 301 each bind substrate; that span reads LVSGG. Residue aspartate 329 participates in Fe cation binding.

Belongs to the KAE1 / TsaD family. It depends on Fe(2+) as a cofactor.

It localises to the cytoplasm. It carries out the reaction L-threonylcarbamoyladenylate + adenosine(37) in tRNA = N(6)-L-threonylcarbamoyladenosine(37) in tRNA + AMP + H(+). In terms of biological role, required for the formation of a threonylcarbamoyl group on adenosine at position 37 (t(6)A37) in tRNAs that read codons beginning with adenine. Is involved in the transfer of the threonylcarbamoyl moiety of threonylcarbamoyl-AMP (TC-AMP) to the N6 group of A37, together with TsaE and TsaB. TsaD likely plays a direct catalytic role in this reaction. This Paenarthrobacter aurescens (strain TC1) protein is tRNA N6-adenosine threonylcarbamoyltransferase.